The sequence spans 454 residues: Diaminobutyrate--2-oxoglutarate aminotransferase (454 aa).

The residue at position 287 (lysine 287) is an N6-(pyridoxal phosphate)lysine.

The protein belongs to the class-III pyridoxal-phosphate-dependent aminotransferase family. Pyridoxal 5'-phosphate is required as a cofactor.

The enzyme catalyses L-2,4-diaminobutanoate + 2-oxoglutarate = L-aspartate 4-semialdehyde + L-glutamate. It functions in the pathway amine and polyamine biosynthesis; 1,3-diaminopropane biosynthesis; 1,3-diaminopropane from L-aspartate 4-semialdehyde: step 1/2. The polypeptide is Diaminobutyrate--2-oxoglutarate aminotransferase (dat) (Haemophilus influenzae (strain ATCC 51907 / DSM 11121 / KW20 / Rd)).